A 190-amino-acid chain; its full sequence is Heme-binding protein 1 (190 aa).

This sequence belongs to the HEBP family. Monomer. In terms of tissue distribution, ubiquitously expressed. Extremely abundant in liver.

The protein localises to the cytoplasm. Functionally, may bind free porphyrinogens that may be present in the cell and thus facilitate removal of these potentially toxic compound. Binds with a high affinity to one molecule of heme or porphyrins. It binds metalloporphyrins, free porphyrins and N-methylprotoporphyrin with similar affinities. The protein is Heme-binding protein 1 (Hebp1) of Mus musculus (Mouse).